Consider the following 878-residue polypeptide: Coatomer subunit gamma (878 aa).

6 HEAT repeats span residues 64-101, 287-324, 326-359, 360-396, 399-434, and 471-508; these read REATDCFFAMTKLFQSKDVVLRRMVYLGIKELSSVAED, RMLSPAFSILQLFCSSPKATLRFAAVRTLNKVAMTHPA, VTTCNLDLEGLITDSNRSVATLAITTLLKTGAES, SVERLMKQISTFVAEISDEFKIVVVQAICALCTKYPR, TVLMNFLSGMLREEGGLEYKTSIVDTIITIIEENAD, and ATPSKYIRFIYNRVILESPIVRAAAVTALSQFGASCPA.

It belongs to the COPG family. Oligomeric complex that consists of at least the alpha, beta, beta', gamma, delta, epsilon and zeta subunits.

It is found in the cytoplasm. Its subcellular location is the golgi apparatus membrane. It localises to the cytoplasmic vesicle. The protein localises to the COPI-coated vesicle membrane. The protein resides in the endoplasmic reticulum. In terms of biological role, the coatomer is a cytosolic protein complex that binds to dilysine motifs and reversibly associates with Golgi non-clathrin-coated vesicles, which further mediate biosynthetic protein transport from the ER, via the Golgi up to the trans Golgi network. Coatomer complex is required for budding from Golgi membranes, and is essential for the retrograde Golgi-to-ER transport of dilysine-tagged proteins. Required for limiting lipid storage in lipid droplets. Involved in the expansion of luminal extracellular matrices and apical membrane during tubulogenesis. Required in the tracheal epithelium for luminal protein secretion and diametric tube growth. In salivary glands, required for deposition of O-glycans and luminal extracellular matrix assembly. Required for epidermal morphogenesis and cuticle development. This chain is Coatomer subunit gamma, found in Drosophila pseudoobscura pseudoobscura (Fruit fly).